A 520-amino-acid polypeptide reads, in one-letter code: RING-type E3 ubiquitin-protein ligase PPIL2 (520 aa).

In terms of domain architecture, U-box spans 35 to 108; the sequence is RRLPFDHCSL…GKYHCPVLFT (74 aa). A coiled-coil region spans residues 197–217; sequence LKNTNAETRETLQELYKEFKG. A Glycyl lysine isopeptide (Lys-Gly) (interchain with G-Cter in SUMO2) cross-link involves residue Lys-216. In terms of domain architecture, PPIase cyclophilin-type spans 278-433; the sequence is KKGYVRLHTN…EEIRIDATTV (156 aa). Residues 456-520 are disordered; sequence APETKVKSSQ…SRGFGDFSSW (65 aa). Over residues 463 to 474 the composition is skewed to low complexity; the sequence is SSQPQAGSQGPQ. The residue at position 470 (Ser-470) is a Phosphoserine. Lys-482 bears the N6-acetyllysine mark.

The protein belongs to the cyclophilin-type PPIase family. PPIL2 subfamily. Component of the minor spliceosome, which splices U12-type introns. Within this complex, interacts with PRPF8/PRP8, EFTUD2/SNU114 and PLRG1. Interacts with isoform 2 of BSG. Interacts (via the PPIase cyclophilin-type domain) with CRNKL1; they may form a trimeric complex with HSP90. In terms of tissue distribution, highest expression in thymus, pancreas and testis. Also detected in heart, placenta, lung, liver, skeletal muscle, kidney, spleen, prostate, ovary, small intestine and colon. Poorly detected in brain and leukocytes. Strong protein expression in lymph node (cortical, paracortical and medullar regions), thyroid (follicular epithelial cells), testis (developing spermatozoa), stomach (cells lining the gastric pit), pancreas, kidney (proximal and distal-tubule cells and collecting duct cells but not in glomeruli), endometrium and colon (goblet cells). Moderate protein expression in spleen, prostate (epithelium and squamous cell carcinomas), placenta and adrenal gland. Weak protein expression in liver, heart, breast, ovary, and lung. No protein expression in brain and bladder. High protein expression in most lymphomas and melanomas.

It is found in the nucleus. It catalyses the reaction S-ubiquitinyl-[E2 ubiquitin-conjugating enzyme]-L-cysteine + [acceptor protein]-L-lysine = [E2 ubiquitin-conjugating enzyme]-L-cysteine + N(6)-ubiquitinyl-[acceptor protein]-L-lysine.. It participates in protein modification; protein ubiquitination. In terms of biological role, has a ubiquitin-protein ligase activity acting as an E3 ubiquitin protein ligase or as an ubiquitin-ubiquitin ligase promoting elongation of ubiquitin chains on substrates. By mediating 'Lys-48'-linked polyubiquitination of proteins could target them for proteasomal degradation. May also function as a chaperone, playing a role in transport to the cell membrane of BSG/Basigin for instance. Probable inactive PPIase with no peptidyl-prolyl cis-trans isomerase activity. As a component of the minor spliceosome, involved in the splicing of U12-type introns in pre-mRNAs. In Homo sapiens (Human), this protein is RING-type E3 ubiquitin-protein ligase PPIL2.